The sequence spans 202 residues: Pyridoxal 5'-phosphate synthase subunit PdxT (202 aa).

49–51 (GES) contacts L-glutamine. C81 serves as the catalytic Nucleophile. L-glutamine-binding positions include R110 and 139–140 (IR). Active-site charge relay system residues include H182 and E184.

It belongs to the glutaminase PdxT/SNO family. In the presence of PdxS, forms a dodecamer of heterodimers. Only shows activity in the heterodimer.

It carries out the reaction aldehydo-D-ribose 5-phosphate + D-glyceraldehyde 3-phosphate + L-glutamine = pyridoxal 5'-phosphate + L-glutamate + phosphate + 3 H2O + H(+). The catalysed reaction is L-glutamine + H2O = L-glutamate + NH4(+). The protein operates within cofactor biosynthesis; pyridoxal 5'-phosphate biosynthesis. In terms of biological role, catalyzes the hydrolysis of glutamine to glutamate and ammonia as part of the biosynthesis of pyridoxal 5'-phosphate. The resulting ammonia molecule is channeled to the active site of PdxS. This Rhodococcus jostii (strain RHA1) protein is Pyridoxal 5'-phosphate synthase subunit PdxT.